The following is a 663-amino-acid chain: DNA topoisomerase 4 subunit B (663 aa).

ATP is bound by residues Tyr-7, Asn-47, Asp-74, 114-120 (GLHGVGA), and Lys-341. A disordered region spans residues 386-416 (REAARKAREDARSGKKNKRKDTLLSGKLTPA). A compositionally biased stretch (basic and acidic residues) spans 387–398 (EAARKAREDARS). The Toprim domain occupies 424-538 (NELYLVEGDS…AGRVFIALPP (115 aa)). Mg(2+) is bound by residues Glu-430, Asp-503, and Asp-505.

It belongs to the type II topoisomerase family. ParE type 2 subfamily. In terms of assembly, heterotetramer composed of ParC and ParE. The cofactor is Mg(2+). It depends on Mn(2+) as a cofactor. Ca(2+) is required as a cofactor.

The catalysed reaction is ATP-dependent breakage, passage and rejoining of double-stranded DNA.. Topoisomerase IV is essential for chromosome segregation. It relaxes supercoiled DNA. Performs the decatenation events required during the replication of a circular DNA molecule. This is DNA topoisomerase 4 subunit B from Staphylococcus aureus (strain NCTC 8325 / PS 47).